Reading from the N-terminus, the 133-residue chain is uncharacterized protein (133 aa).

Residues 11–31 (YFLISVFLIFIVSGITYFYST) traverse the membrane as a helical segment.

It is found in the membrane. This is an uncharacterized protein from Borreliella burgdorferi (strain ATCC 35210 / DSM 4680 / CIP 102532 / B31) (Borrelia burgdorferi).